We begin with the raw amino-acid sequence, 55 residues long: Large ribosomal subunit protein bL33A (55 aa).

Belongs to the bacterial ribosomal protein bL33 family.

The sequence is that of Large ribosomal subunit protein bL33A from Mycobacterium sp. (strain KMS).